A 353-amino-acid chain; its full sequence is Putative glutamine synthetase (353 aa).

Residues 19 to 102 (SIIEYVWIGG…VICDTYDVNG (84 aa)) enclose the GS beta-grasp domain. One can recognise a GS catalytic domain in the interval 109–353 (HRHNANIIFE…IILQTVCESD (245 aa)).

The protein belongs to the glutamine synthetase family.

It catalyses the reaction L-glutamate + NH4(+) + ATP = L-glutamine + ADP + phosphate + H(+). The polypeptide is Putative glutamine synthetase (Acanthamoeba polyphaga (Amoeba)).